The primary structure comprises 142 residues: Large ribosomal subunit protein uL13 (142 aa).

This sequence belongs to the universal ribosomal protein uL13 family. Part of the 50S ribosomal subunit.

Functionally, this protein is one of the early assembly proteins of the 50S ribosomal subunit, although it is not seen to bind rRNA by itself. It is important during the early stages of 50S assembly. The sequence is that of Large ribosomal subunit protein uL13 from Caldicellulosiruptor bescii (strain ATCC BAA-1888 / DSM 6725 / KCTC 15123 / Z-1320) (Anaerocellum thermophilum).